A 159-amino-acid polypeptide reads, in one-letter code: Ribosomal RNA large subunit methyltransferase H (159 aa).

Residues Leu76, Gly108, and 127–132 (LSDMTF) contribute to the S-adenosyl-L-methionine site.

It belongs to the RNA methyltransferase RlmH family. In terms of assembly, homodimer.

It is found in the cytoplasm. It carries out the reaction pseudouridine(1915) in 23S rRNA + S-adenosyl-L-methionine = N(3)-methylpseudouridine(1915) in 23S rRNA + S-adenosyl-L-homocysteine + H(+). Functionally, specifically methylates the pseudouridine at position 1915 (m3Psi1915) in 23S rRNA. This is Ribosomal RNA large subunit methyltransferase H from Acetivibrio thermocellus (strain ATCC 27405 / DSM 1237 / JCM 9322 / NBRC 103400 / NCIMB 10682 / NRRL B-4536 / VPI 7372) (Clostridium thermocellum).